The chain runs to 280 residues: Large ribosomal subunit protein uL2 (280 aa).

Disordered stretches follow at residues 32–54 (SLLV…SRHM) and 221–280 (RGMA…DSKK). Residues 37-49 (NKSTGGRNNNGRV) are compositionally biased toward polar residues. The span at 232 to 242 (MGGGEGKSKSG) shows a compositional bias: gly residues. Basic residues predominate over residues 257–280 (KGLKTRKRKKASSKLIVRRRDSKK).

It belongs to the universal ribosomal protein uL2 family. In terms of assembly, part of the 50S ribosomal subunit. Forms a bridge to the 30S subunit in the 70S ribosome.

Functionally, one of the primary rRNA binding proteins. Required for association of the 30S and 50S subunits to form the 70S ribosome, for tRNA binding and peptide bond formation. It has been suggested to have peptidyltransferase activity; this is somewhat controversial. Makes several contacts with the 16S rRNA in the 70S ribosome. This chain is Large ribosomal subunit protein uL2, found in Chloroherpeton thalassium (strain ATCC 35110 / GB-78).